The sequence spans 150 residues: SsrA-binding protein (150 aa).

The protein belongs to the SmpB family.

It localises to the cytoplasm. Functionally, required for rescue of stalled ribosomes mediated by trans-translation. Binds to transfer-messenger RNA (tmRNA), required for stable association of tmRNA with ribosomes. tmRNA and SmpB together mimic tRNA shape, replacing the anticodon stem-loop with SmpB. tmRNA is encoded by the ssrA gene; the 2 termini fold to resemble tRNA(Ala) and it encodes a 'tag peptide', a short internal open reading frame. During trans-translation Ala-aminoacylated tmRNA acts like a tRNA, entering the A-site of stalled ribosomes, displacing the stalled mRNA. The ribosome then switches to translate the ORF on the tmRNA; the nascent peptide is terminated with the 'tag peptide' encoded by the tmRNA and targeted for degradation. The ribosome is freed to recommence translation, which seems to be the essential function of trans-translation. The protein is SsrA-binding protein of Borrelia garinii subsp. bavariensis (strain ATCC BAA-2496 / DSM 23469 / PBi) (Borreliella bavariensis).